A 33-amino-acid chain; its full sequence is Vejocalcin (33 aa).

3 disulfides stabilise this stretch: Cys-3–Cys-17, Cys-10–Cys-21, and Cys-16–Cys-32. The interval 23 to 24 (RR) is essential for stimulation of [3H]ryanodine binding to RYR1.

In terms of tissue distribution, expressed by the venom gland.

It localises to the secreted. This toxin stabilizes ryanodine receptor 1 (RyR1) opening in a long-lasting subconductance state (60% of the full conductance state). Furthermore, it triggers calcium release from sarcoplasmic vesicles (31 nM are enough to induce a sharp release, and 65% of the total calcium is released after toxin (100 nM) addition) probably by acting as a cell-penetrating peptide (CPP). In addition, it has been shown to dose-dependently stimulate ryanodine binding to RyR1 (EC(50)=3.7 nM). It also augments the bell-shaped calcium-[3H]ryanodine binding curve that is maximal at about 10 uM calcium concentration. It binds a different site as ryanodine. It acts synergistically with caffeine. In vivo, intracerebroventricular injection into mice induces neurotoxic symptoms, followed by death. This is Vejocalcin from Vaejovis mexicanus (Mexican scorpion).